The following is a 176-amino-acid chain: ATP synthase subunit b (176 aa).

The helical transmembrane segment at 7-27 (IQIPDGSAIFVLLTFILLMFI) threads the bilayer. A disordered region spans residues 75–94 (SQSQATALMENARKSSEEQS). The segment covering 85-94 (NARKSSEEQS) has biased composition (basic and acidic residues).

Belongs to the ATPase B chain family. In terms of assembly, F-type ATPases have 2 components, F(1) - the catalytic core - and F(0) - the membrane proton channel. F(1) has five subunits: alpha(3), beta(3), gamma(1), delta(1), epsilon(1). F(0) has three main subunits: a(1), b(2) and c(10-14). The alpha and beta chains form an alternating ring which encloses part of the gamma chain. F(1) is attached to F(0) by a central stalk formed by the gamma and epsilon chains, while a peripheral stalk is formed by the delta and b chains.

It is found in the cell membrane. F(1)F(0) ATP synthase produces ATP from ADP in the presence of a proton or sodium gradient. F-type ATPases consist of two structural domains, F(1) containing the extramembraneous catalytic core and F(0) containing the membrane proton channel, linked together by a central stalk and a peripheral stalk. During catalysis, ATP synthesis in the catalytic domain of F(1) is coupled via a rotary mechanism of the central stalk subunits to proton translocation. In terms of biological role, component of the F(0) channel, it forms part of the peripheral stalk, linking F(1) to F(0). The protein is ATP synthase subunit b of Oenococcus oeni (strain ATCC BAA-331 / PSU-1).